A 1248-amino-acid polypeptide reads, in one-letter code: Structural maintenance of chromosomes protein 1B (1248 aa).

32–39 is a binding site for ATP; the sequence is GPNGSGKS. Residues 163 to 502 are a coiled coil; sequence EFIGEYEAKK…EGKRQQKRAE (340 aa). Residues 514 to 629 form the SMC hinge domain; the sequence is SVFGRLLDLC…ETVEEARHIA (116 aa). Lys648, Lys713, and Lys1032 each carry N6-acetyllysine. Positions 666–912 form a coiled coil; that stretch reads WDEKELHNLR…REVGKLQKEV (247 aa). Residues 1219–1228 are compositionally biased toward basic and acidic residues; sequence PDTEDQEGSR. Positions 1219-1248 are disordered; it reads PDTEDQEGSRSHRKPRVPRVSMSPKSPQSR.

It belongs to the SMC family. SMC1 subfamily. Forms a heterodimer with SMC3. Component of a meiosis-specific cohesin complex, probably composed of the SMC1B and SMC3 heterodimer attached via their SMC hinge domain, RAD21 (or its meiosis-specific related protein REC8), which link them, and STAG3, which interacts with RAD21 or REC8. The cohesin complex interacts with the cohesin loading complex subunits NIPBL/Scc2 (via HEAT repeats) and MAU2/Scc4. NIPBL directly contacts all members of the complex, RAD21, SMC1A/B, SMC3 and STAG1. Spermatocytes (at protein level). Testis and ovary specific. Not expressed in somatic cells.

The protein localises to the nucleus. Its subcellular location is the chromosome. It is found in the centromere. In terms of biological role, meiosis-specific component of cohesin complex. Required for the maintenance of meiotic cohesion, but not, or only to a minor extent, for its establishment. Contributes to axial element (AE) formation and the organization of chromatin loops along the AE. Plays a key role in synapsis, recombination and chromosome movements. The cohesin complex is required for the cohesion of sister chromatids after DNA replication. The cohesin complex apparently forms a large proteinaceous ring within which sister chromatids can be trapped. At anaphase, the complex is cleaved and dissociates from chromatin, allowing sister chromatids to segregate. The meiosis-specific cohesin complex probably replaces mitosis specific cohesin complex when it dissociates from chromatin during prophase I. This chain is Structural maintenance of chromosomes protein 1B (Smc1b), found in Mus musculus (Mouse).